The following is a 274-amino-acid chain: Thymidylate synthase (274 aa).

Arginine 21 lines the dUMP pocket. A (6R)-5,10-methylene-5,6,7,8-tetrahydrofolate-binding site is contributed by histidine 51. Position 123–124 (arginine 123–arginine 124) interacts with dUMP. Catalysis depends on cysteine 156, which acts as the Nucleophile. Residues arginine 176–aspartate 179, asparagine 187, and histidine 217–tyrosine 219 contribute to the dUMP site. Aspartate 179 provides a ligand contact to (6R)-5,10-methylene-5,6,7,8-tetrahydrofolate. (6R)-5,10-methylene-5,6,7,8-tetrahydrofolate is bound at residue alanine 273.

The protein belongs to the thymidylate synthase family. Bacterial-type ThyA subfamily. Homodimer.

It localises to the cytoplasm. It catalyses the reaction dUMP + (6R)-5,10-methylene-5,6,7,8-tetrahydrofolate = 7,8-dihydrofolate + dTMP. Its pathway is pyrimidine metabolism; dTTP biosynthesis. In terms of biological role, catalyzes the reductive methylation of 2'-deoxyuridine-5'-monophosphate (dUMP) to 2'-deoxythymidine-5'-monophosphate (dTMP) while utilizing 5,10-methylenetetrahydrofolate (mTHF) as the methyl donor and reductant in the reaction, yielding dihydrofolate (DHF) as a by-product. This enzymatic reaction provides an intracellular de novo source of dTMP, an essential precursor for DNA biosynthesis. The sequence is that of Thymidylate synthase from Flavobacterium psychrophilum (strain ATCC 49511 / DSM 21280 / CIP 103535 / JIP02/86).